Reading from the N-terminus, the 2359-residue chain is Low-reducing polyketide synthase drtA (2359 aa).

The region spanning 17–444 is the Ketosynthase family 3 (KS3) domain; that stretch reads LPPIAVVSFA…GANAHVIVEE (428 aa). Residues Cys-190, His-327, and His-367 each act as for beta-ketoacyl synthase activity in the active site. Residues 556 to 868 form a malonyl-CoA:ACP transacylase (MAT) domain region; the sequence is VFTGQGSQWP…QYLAALDRGK (313 aa). Ser-648 functions as the For malonyltransferase activity in the catalytic mechanism. The interval 940 to 1077 is N-terminal hotdog fold; sequence HELLGRKILG…GRISVRQVAA (138 aa). A dehydratase (DH) domain region spans residues 940-1245; it reads HELLGRKILG…FKGLRFSELN (306 aa). The 311-residue stretch at 940–1250 folds into the PKS/mFAS DH domain; that stretch reads HELLGRKILG…FSELNMGDGV (311 aa). Catalysis depends on His-972, which acts as the Proton acceptor; for dehydratase activity. Residues 1089 to 1250 form a C-terminal hotdog fold region; sequence AYSESAEHWY…FSELNMGDGV (162 aa). The active-site Proton donor; for dehydratase activity is the Asp-1153. The tract at residues 1659–1970 is enoyl reductase (ER) domain; the sequence is GSFDSLELYE…TGRHVGKVVV (312 aa). The interval 1995–2172 is ketoreductase (KR) domain; sequence SYLITGGLHG…LSLDIGAVQD (178 aa). The Carrier domain maps to 2280–2356; sequence ALTEAAIELF…ALCSKLITRL (77 aa). Ser-2316 carries the post-translational modification O-(pantetheine 4'-phosphoryl)serine.

The protein operates within secondary metabolite biosynthesis; terpenoid biosynthesis. Functionally, low-reducing polyketide synthase; part of the gene cluster that mediates the biosynthesis of various drimane-type sesquiterpene esters, compounds that exhibit diverse biological activities and are widely present in eukaryotes. The pathway begins with the synthesis of the backbone drimenol by the terpene cyclase drtB using farnesyl pyrophosphate (FPP) as substrate. The cytochrome P450 monooxygenase drtD is then responsible for the hydroxylations at C-6, C-9 and C-12, as well as the oxidation of hydroxyl groups at C-6 and C-11 to a ketone and an aldehyde, respectively. Then, the biosynthesis can go in two directions, either the hydroxylated drimenol is further hydroxylated at C-2 and C-3 by an enzyme(s) not associated with the drt cluster, or the FAD-binding oxidoreductase drtC further oxidizes C-11 or C-12 to form the butyrolactone ring. DrtB, drtD and drtC are solely responsible for the formation of the different drimane structures observed during drimane sesquiterpenes biosynthesis. The polyketide synthase drtA synthesizes different lengths (C6 and C8) of PKS chains, which are then oxidized to varying degrees by the short-chain dehydrogenase drtF. Finally, these PKS chains are transferred onto drimane sesquiterpenes by the acyltransferase drtE, forming the sesquiterpene esters. In addition to the different fatty acyl-CoA chains produced by drtA, drtE is also able to use cinnamoyl-CoA as a substrate. The protein is Low-reducing polyketide synthase drtA of Aspergillus calidoustus.